The sequence spans 626 residues: Interferon-induced GTP-binding protein MxC (626 aa).

Residues 40 to 313 (DLNLPAIAVI…LVEHIAKNVP (274 aa)) form the Dynamin-type G domain. Residues 50 to 57 (GDQSSGKS) are G1 motif. 50-57 (GDQSSGKS) is a GTP binding site. The G2 motif stretch occupies residues 75–77 (VTR). The segment at 151–154 (DLPG) is G3 motif. Residues 151 to 155 (DLPGI) and 220 to 223 (TKPD) contribute to the GTP site. The interval 220 to 223 (TKPD) is G4 motif. The tract at residues 252-255 (KCRG) is G5 motif. The GED domain maps to 534–624 (LRETAFHLTS…ALPKVVHSAN (91 aa)).

Belongs to the TRAFAC class dynamin-like GTPase superfamily. Dynamin/Fzo/YdjA family.

It is found in the cytoplasm. In Danio rerio (Zebrafish), this protein is Interferon-induced GTP-binding protein MxC (mxc).